The following is a 407-amino-acid chain: MLRWITAGESHGRALVAVVEGMVAGVEVTSTAIADQLARRRLGYGRGARMAFERDGVTVLSGVRHGVTLGGPIAIEIDNTEWPKWESVMAADPVDAAELEDSARNAPLTRPRPGHADYAGMLKYGFDDARPVLERASARETAARVAAGTIARQFLRQALGVEVLSHVISIGASARYDGPPPGSEDLTVIDASLVRAFDEQVEKSMIAEIEAAKKDGDTLGGVVEAVVLGLPVGLGSFTSGDDRLDSQLAAAVMGIQAIKGVEIGDGFATARRRGSCAHDEMYSGPGGVVRLTNRSGGLEGGMTNGQPLRVRAAMKPISTVPRALATVDLATGEEAIAIHQRSDVCAVPAAGVVVETMVALVLARAALRKFGGDSLGETRRNLAAYQRAVADREAPVAQYCGESGIGG.

The NADP(+) site is built by R40 and R46. Residues 135-137, 256-257, G300, 315-319, and R341 contribute to the FMN site; these read RAS, QA, and KPIST.

This sequence belongs to the chorismate synthase family. In terms of assembly, homotetramer. FMNH2 serves as cofactor.

The catalysed reaction is 5-O-(1-carboxyvinyl)-3-phosphoshikimate = chorismate + phosphate. The protein operates within metabolic intermediate biosynthesis; chorismate biosynthesis; chorismate from D-erythrose 4-phosphate and phosphoenolpyruvate: step 7/7. Catalyzes the anti-1,4-elimination of the C-3 phosphate and the C-6 proR hydrogen from 5-enolpyruvylshikimate-3-phosphate (EPSP) to yield chorismate, which is the branch point compound that serves as the starting substrate for the three terminal pathways of aromatic amino acid biosynthesis. This reaction introduces a second double bond into the aromatic ring system. This Mycobacterium leprae (strain Br4923) protein is Chorismate synthase.